Consider the following 30-residue polypeptide: Cyclotide cter-Q (30 aa).

A cross-link (cyclopeptide (Gly-Asn)) is located at residues 1-30 (GIPCGESCVFIPCISTVIGCSCKNKVCYRN). 3 disulfides stabilise this stretch: C4–C20, C8–C22, and C13–C27.

Post-translationally, this is a cyclic peptide.

It localises to the secreted. In terms of biological role, probably participates in a plant defense mechanism. The sequence is that of Cyclotide cter-Q from Clitoria ternatea (Butterfly pea).